The following is a 390-amino-acid chain: Trehalose-phosphate phosphatase (390 aa).

Asp150 functions as the Nucleophile in the catalytic mechanism. Mg(2+) contacts are provided by Asp150, Asp152, and Asp333. 150-152 (DFD) is a binding site for substrate.

It belongs to the trehalose phosphatase family. Mg(2+) is required as a cofactor.

The catalysed reaction is alpha,alpha-trehalose 6-phosphate + H2O = alpha,alpha-trehalose + phosphate. It participates in glycan biosynthesis; trehalose biosynthesis. Removes the phosphate from trehalose 6-phosphate to produce free trehalose. The chain is Trehalose-phosphate phosphatase (otsB) from Mycobacterium marinum (strain ATCC BAA-535 / M).